The following is a 1468-amino-acid chain: ABC transporter G family member 34 (1468 aa).

The tract at residues 33–53 (NGAFSRSSSSSSRRMRGEEDD) is disordered. In terms of domain architecture, ABC transporter 1 spans 178-450 (ANALGILPTR…FELMGFKCPE (273 aa)). 211–218 (GPPGSGKT) contacts ATP. Residues 528 to 741 (ELLKANIDRE…AQNAVSVNEF (214 aa)) form the ABC transmembrane type-2 1 domain. The next 6 membrane-spanning stretches (helical) occupy residues 546-566 (FVYI…MTVF), 575-595 (SVAD…MIML), 634-654 (SPMS…VIGF), 666-686 (LLML…GGAA), 690-710 (IVAN…GGFI), and 778-798 (IGFG…TLAL). The region spanning 871 to 1123 (LTFEDIKYSV…ELIKYFEGIQ (253 aa)) is the ABC transporter 2 domain. An ATP-binding site is contributed by 916-923 (GVSGAGKT). An ABC transmembrane type-2 2 domain is found at 1196 to 1410 (IQCLACLWKQ…TLYGLIVSQY (215 aa)). 7 helical membrane-spanning segments follow: residues 1217-1237 (AIRL…FWDL), 1247-1267 (LFNA…LNGQ), 1303-1323 (FPYT…MIGF), 1330-1350 (FFWY…YGMM), 1360-1380 (VASI…GFVI), 1387-1407 (VWWR…GLIV), and 1440-1460 (FVAV…GFAI).

This sequence belongs to the ABC transporter superfamily. ABCG family. PDR (TC 3.A.1.205) subfamily.

Its subcellular location is the membrane. May be a general defense protein. This chain is ABC transporter G family member 34, found in Oryza sativa subsp. japonica (Rice).